Here is a 116-residue protein sequence, read N- to C-terminus: NADH-ubiquinone oxidoreductase chain 3 (116 aa).

Helical transmembrane passes span 10-30, 64-84, and 88-108; these read FLTL…TFAA, FFLV…LFPL, and VFFH…FEWV.

It belongs to the complex I subunit 3 family.

It is found in the mitochondrion membrane. The catalysed reaction is a ubiquinone + NADH + 5 H(+)(in) = a ubiquinol + NAD(+) + 4 H(+)(out). In terms of biological role, core subunit of the mitochondrial membrane respiratory chain NADH dehydrogenase (Complex I) that is believed to belong to the minimal assembly required for catalysis. Complex I functions in the transfer of electrons from NADH to the respiratory chain. The immediate electron acceptor for the enzyme is believed to be ubiquinone. This Patiria pectinifera (Starfish) protein is NADH-ubiquinone oxidoreductase chain 3 (ND3).